The primary structure comprises 134 residues: Large-conductance mechanosensitive channel (134 aa).

Transmembrane regions (helical) follow at residues 10–30 (FAMR…GAFG) and 76–96 (GAFL…FVVI).

Belongs to the MscL family. Homopentamer.

Its subcellular location is the cell inner membrane. In terms of biological role, channel that opens in response to stretch forces in the membrane lipid bilayer. May participate in the regulation of osmotic pressure changes within the cell. This is Large-conductance mechanosensitive channel from Prosthecochloris aestuarii (strain DSM 271 / SK 413).